We begin with the raw amino-acid sequence, 95 residues long: Small ribosomal subunit protein uS19 (95 aa).

Belongs to the universal ribosomal protein uS19 family.

Its function is as follows. Protein S19 forms a complex with S13 that binds strongly to the 16S ribosomal RNA. This is Small ribosomal subunit protein uS19 (rpsS) from Treponema pallidum (strain Nichols).